We begin with the raw amino-acid sequence, 324 residues long: Beta-ketoacyl-[acyl-carrier-protein] synthase III (324 aa).

Residues Cys-112 and His-249 contribute to the active site. An ACP-binding region spans residues 250-254; it reads QANRR. Asn-279 is an active-site residue.

Belongs to the thiolase-like superfamily. FabH family. As to quaternary structure, homodimer.

It is found in the cytoplasm. It carries out the reaction malonyl-[ACP] + acetyl-CoA + H(+) = 3-oxobutanoyl-[ACP] + CO2 + CoA. Its pathway is lipid metabolism; fatty acid biosynthesis. Functionally, catalyzes the condensation reaction of fatty acid synthesis by the addition to an acyl acceptor of two carbons from malonyl-ACP. Catalyzes the first condensation reaction which initiates fatty acid synthesis and may therefore play a role in governing the total rate of fatty acid production. Possesses both acetoacetyl-ACP synthase and acetyl transacylase activities. Its substrate specificity determines the biosynthesis of branched-chain and/or straight-chain of fatty acids. In Streptococcus pyogenes serotype M6 (strain ATCC BAA-946 / MGAS10394), this protein is Beta-ketoacyl-[acyl-carrier-protein] synthase III.